A 546-amino-acid polypeptide reads, in one-letter code: Thermosome subunit beta (546 aa).

This sequence belongs to the TCP-1 chaperonin family. In terms of assembly, forms a Heterooligomeric complex of two stacked eight-membered rings.

Functionally, molecular chaperone; binds unfolded polypeptides in vitro, and has a weak ATPase activity. This is Thermosome subunit beta (thsB) from Thermococcus kodakarensis (strain ATCC BAA-918 / JCM 12380 / KOD1) (Pyrococcus kodakaraensis (strain KOD1)).